Here is a 239-residue protein sequence, read N- to C-terminus: Pyridoxine 5'-phosphate synthase (239 aa).

N7 contacts 3-amino-2-oxopropyl phosphate. 9-10 (DH) contacts 1-deoxy-D-xylulose 5-phosphate. R18 contributes to the 3-amino-2-oxopropyl phosphate binding site. The active-site Proton acceptor is H43. Positions 45 and 50 each coordinate 1-deoxy-D-xylulose 5-phosphate. E70 (proton acceptor) is an active-site residue. A 1-deoxy-D-xylulose 5-phosphate-binding site is contributed by T100. H191 functions as the Proton donor in the catalytic mechanism. Residues G192 and 213 to 214 (GH) contribute to the 3-amino-2-oxopropyl phosphate site.

It belongs to the PNP synthase family. Homooctamer; tetramer of dimers.

The protein resides in the cytoplasm. The catalysed reaction is 3-amino-2-oxopropyl phosphate + 1-deoxy-D-xylulose 5-phosphate = pyridoxine 5'-phosphate + phosphate + 2 H2O + H(+). The protein operates within cofactor biosynthesis; pyridoxine 5'-phosphate biosynthesis; pyridoxine 5'-phosphate from D-erythrose 4-phosphate: step 5/5. Catalyzes the complicated ring closure reaction between the two acyclic compounds 1-deoxy-D-xylulose-5-phosphate (DXP) and 3-amino-2-oxopropyl phosphate (1-amino-acetone-3-phosphate or AAP) to form pyridoxine 5'-phosphate (PNP) and inorganic phosphate. The protein is Pyridoxine 5'-phosphate synthase of Geotalea uraniireducens (strain Rf4) (Geobacter uraniireducens).